The chain runs to 323 residues: Melanocortin receptor 3 (323 aa).

Over 1–37 (MNASCCLPSVQPTLPNGSEHLQAPFFSNQSSSAFCEQ) the chain is Extracellular. 3 N-linked (GlcNAc...) asparagine glycosylation sites follow: Asn2, Asn16, and Asn28. The chain crosses the membrane as a helical span at residues 38–63 (VFIKPEVFLSLGIVSLLENILVILAV). The Cytoplasmic segment spans residues 64-75 (VRNGNLHSPMYF). Residues 76 to 100 (FLCSLAVADMLVSVSNALETIMIAI) traverse the membrane as a helical segment. The Extracellular segment spans residues 101-118 (VHSDYLTFEDQFIQHMDN). The helical transmembrane segment at 119 to 140 (IFDSMICISLVASICNLLAIAV) threads the bilayer. Over 141-160 (DRYVTIFYALRYHSIMTVRK) the chain is Cytoplasmic. The chain crosses the membrane as a helical span at residues 161-181 (ALTLIVAIWVCCGVCGVVFIV). Residues 182–186 (YSESK) are Extracellular-facing. Residues 187-210 (MVIVCLITMFFAMMLLMGTLYVHM) form a helical membrane-spanning segment. The Cytoplasmic portion of the chain corresponds to 211–245 (FLFARLHVKRIAALPPADGVAPQQHSCMKGAVTIT). The chain crosses the membrane as a helical span at residues 246–268 (ILLGVFIFCWAPFFLHLVLIITC). The Extracellular segment spans residues 269–277 (PTNPYCICY). Residues 278 to 301 (TAHFNTYLVLIMCNSVIDPLIYAF) traverse the membrane as a helical segment. Residues 302 to 323 (RSLELRNTFREILCGCNGMNLG) lie on the Cytoplasmic side of the membrane. The S-palmitoyl cysteine moiety is linked to residue Cys315.

The protein belongs to the G-protein coupled receptor 1 family. As to expression, brain, placental, and gut tissues.

It is found in the cell membrane. Receptor for MSH (alpha, beta and gamma) and ACTH. This receptor is mediated by G proteins which activate adenylate cyclase. Required for expression of anticipatory patterns of activity and wakefulness during periods of limited nutrient availability and for the normal regulation of circadian clock activity in the brain. The polypeptide is Melanocortin receptor 3 (MC3R) (Homo sapiens (Human)).